Here is a 107-residue protein sequence, read N- to C-terminus: uncharacterized protein (107 aa).

A run of 2 helical transmembrane segments spans residues 5-25 (WTII…VINV) and 42-62 (ILVI…VGIF). The span at 82-92 (IHKQEDTHLAD) shows a compositional bias: basic and acidic residues. A disordered region spans residues 82–107 (IHKQEDTHLADQTDTQDASAMIEKKD).

Its subcellular location is the cell membrane. This is an uncharacterized protein from Bacillus subtilis (strain 168).